Reading from the N-terminus, the 577-residue chain is Proline--tRNA ligase (577 aa).

This sequence belongs to the class-II aminoacyl-tRNA synthetase family. ProS type 1 subfamily. Homodimer.

The protein resides in the cytoplasm. It catalyses the reaction tRNA(Pro) + L-proline + ATP = L-prolyl-tRNA(Pro) + AMP + diphosphate. In terms of biological role, catalyzes the attachment of proline to tRNA(Pro) in a two-step reaction: proline is first activated by ATP to form Pro-AMP and then transferred to the acceptor end of tRNA(Pro). As ProRS can inadvertently accommodate and process non-cognate amino acids such as alanine and cysteine, to avoid such errors it has two additional distinct editing activities against alanine. One activity is designated as 'pretransfer' editing and involves the tRNA(Pro)-independent hydrolysis of activated Ala-AMP. The other activity is designated 'posttransfer' editing and involves deacylation of mischarged Ala-tRNA(Pro). The misacylated Cys-tRNA(Pro) is not edited by ProRS. The chain is Proline--tRNA ligase from Chlamydia abortus (strain DSM 27085 / S26/3) (Chlamydophila abortus).